The chain runs to 303 residues: Peroxisomal trans-2-enoyl-CoA reductase (303 aa).

23–47 (VTGGATGIGKAIVKELLELGSNVVI) contacts NADP(+). Residue Lys32 is modified to N6-succinyllysine. Residue Ser49 is modified to Phosphoserine. Tyr179 (proton acceptor) is an active-site residue. Phosphotyrosine is present on Tyr179. The short motif at 301–303 (AKL) is the Microbody targeting signal element.

Belongs to the short-chain dehydrogenases/reductases (SDR) family. In terms of assembly, interacts with PEX5, probably required to target it into peroxisomes.

It is found in the peroxisome. The enzyme catalyses a (2E)-enoyl-CoA + NADPH + H(+) = a 2,3-saturated acyl-CoA + NADP(+). It carries out the reaction (2E)-decenoyl-CoA + NADPH + H(+) = decanoyl-CoA + NADP(+). It catalyses the reaction (2E)-hexenoyl-CoA + NADPH + H(+) = hexanoyl-CoA + NADP(+). The catalysed reaction is (2E)-octenoyl-CoA + NADPH + H(+) = octanoyl-CoA + NADP(+). The enzyme catalyses (2E)-dodecenoyl-CoA + NADPH + H(+) = dodecanoyl-CoA + NADP(+). It carries out the reaction (2E)-tetradecenoyl-CoA + NADPH + H(+) = tetradecanoyl-CoA + NADP(+). Its pathway is lipid metabolism; fatty acid biosynthesis. Its function is as follows. Participates in chain elongation of fatty acids. Catalyzes the reduction of trans-2-enoyl-CoAs of varying chain lengths from 6:1 to 16:1, having maximum activity with 10:1 CoA. Has no 2,4-dienoyl-CoA reductase activity. This is Peroxisomal trans-2-enoyl-CoA reductase from Homo sapiens (Human).